Here is a 98-residue protein sequence, read N- to C-terminus: Integration host factor subunit beta (98 aa).

The protein belongs to the bacterial histone-like protein family. As to quaternary structure, heterodimer of an alpha and a beta chain.

In terms of biological role, this protein is one of the two subunits of integration host factor, a specific DNA-binding protein that functions in genetic recombination as well as in transcriptional and translational control. The chain is Integration host factor subunit beta from Marinobacter nauticus (strain ATCC 700491 / DSM 11845 / VT8) (Marinobacter aquaeolei).